The chain runs to 621 residues: Threonine--tRNA ligase (621 aa).

The interval 1-137 (MRILQLHCDS…ESSKVVTKDS (137 aa)) is editing domain. The disordered stretch occupies residues 128 to 150 (ESSKVVTKDSTTKDDDEDTSDAL). The interval 202–501 (PHVALMKKLA…SKKGKKPQLP (300 aa)) is catalytic. Cysteine 294, histidine 346, and histidine 470 together coordinate Zn(2+). The span at 598 to 612 (QTSGKPYTGLNQSQH) shows a compositional bias: polar residues. Residues 598–621 (QTSGKPYTGLNQSQHLSKRPQLMV) form a disordered region.

It belongs to the class-II aminoacyl-tRNA synthetase family. In terms of assembly, homodimer. It depends on Zn(2+) as a cofactor.

The protein resides in the cytoplasm. It carries out the reaction tRNA(Thr) + L-threonine + ATP = L-threonyl-tRNA(Thr) + AMP + diphosphate + H(+). Its function is as follows. Catalyzes the attachment of threonine to tRNA(Thr) in a two-step reaction: L-threonine is first activated by ATP to form Thr-AMP and then transferred to the acceptor end of tRNA(Thr). Also edits incorrectly charged L-seryl-tRNA(Thr). The chain is Threonine--tRNA ligase from Nitrosopumilus maritimus (strain SCM1).